Reading from the N-terminus, the 1405-residue chain is Centlein (1405 aa).

The segment covering 1–14 (MAARSPPSPHPSPP) has biased composition (pro residues). A disordered region spans residues 1–79 (MAARSPPSPH…GGAAPAHAPL (79 aa)). Position 2 is an N-acetylalanine (alanine 2). 2 positions are modified to phosphoserine: serine 5 and serine 22. The segment covering 48 to 58 (VVADESDKIWV) has biased composition (basic and acidic residues). Residues 61 to 71 (EGSGGRRGPGG) show a composition bias toward gly residues. The stretch at 95–126 (EEAMVTRTQLLEEELSSLKEELALCQADKEFV) forms a coiled coil. Disordered stretches follow at residues 421-450 (KLKE…QVPH) and 493-529 (SRKS…EELQ). Coiled coils occupy residues 613-655 (NELA…ELNR) and 681-793 (KNGK…ELIN). Residues 865–917 (WEDVSESSSDSEAQTSQTLGTIIVETSQKISPTEDGKDQKESDPTEDSQTQGK) form a disordered region. Residues 877-895 (AQTSQTLGTIIVETSQKIS) are compositionally biased toward polar residues. Positions 896 to 907 (PTEDGKDQKESD) are enriched in basic and acidic residues. A coiled-coil region spans residues 980-1311 (NIILLRERII…IRELKKMKKN (332 aa)). At threonine 1343 the chain carries Phosphothreonine.

Interacts with CEP250 and CEP68. Interacts with NEK2; the interaction leads to phosphorylation of CNTLN. Phosphorylated directly or indirectly by NEK2.

It is found in the cytoplasm. The protein resides in the cytoskeleton. It localises to the microtubule organizing center. The protein localises to the centrosome. Its subcellular location is the centriole. In terms of biological role, required for centrosome cohesion and recruitment of CEP68 to centrosomes. The protein is Centlein (CNTLN) of Homo sapiens (Human).